Here is a 352-residue protein sequence, read N- to C-terminus: Sodium-lithium/proton antiporter (352 aa).

8 helical membrane-spanning segments follow: residues 11–31, 32–52, 61–81, 159–179, 216–236, 241–261, 271–291, and 317–337; these read ILLL…PVSV, PLII…WMQF, AVTI…TYAV, IPEY…FMLE, AQFL…FWIT, IVMS…SIVI, IVGD…LLAI, and IGLQ…VIAF.

This sequence belongs to the autoinducer-2 exporter (AI-2E) (TC 2.A.86) family.

Its subcellular location is the cell membrane. Its function is as follows. Catalyzes the pH-dependent efflux of sodium and lithium in exchange for external protons. This is Sodium-lithium/proton antiporter from Halobacillus andaensis.